A 745-amino-acid polypeptide reads, in one-letter code: Receptor-type adenylate cyclase (745 aa).

Over 1-341 the chain is Extracellular; sequence GELGQTDRFF…NEGALTRAQL (341 aa). 4 N-linked (GlcNAc...) asparagine glycosylation sites follow: Asn-15, Asn-50, Asn-189, and Asn-312. Residues 342-362 form a helical membrane-spanning segment; that stretch reads IGVVVGTIFAVLLLLALGIVL. Topologically, residues 363–745 are cytoplasmic; the sequence is CVALRNTRDN…GSDEVARTCV (383 aa). A Guanylate cyclase domain is found at 384-538; that stretch reads TLIFTDIESS…RTPNLAARTE (155 aa). Mg(2+) contacts are provided by Asp-389 and Asp-432.

Belongs to the adenylyl cyclase class-3 family. Requires Mg(2+) as cofactor.

The protein resides in the cell membrane. It carries out the reaction ATP = 3',5'-cyclic AMP + diphosphate. Functionally, could act as a receptor for an unknown ligand. This Trypanosoma congolense protein is Receptor-type adenylate cyclase.